Consider the following 209-residue polypeptide: Ras-like GTP-binding protein RYL2 (209 aa).

12-19 (GAQGVGKT) is a GTP binding site. Residues 34-42 (QASTIGASF) carry the Effector region motif. GTP is bound by residues 60-64 (DTAGQ) and 118-121 (TKVD). 2 S-geranylgeranyl cysteine lipidation sites follow: C208 and C209.

Belongs to the small GTPase superfamily. Rab family.

The protein resides in the cell membrane. Functionally, protein transport. Probably involved in vesicular traffic. This chain is Ras-like GTP-binding protein RYL2 (RYL2), found in Yarrowia lipolytica (strain CLIB 122 / E 150) (Yeast).